The primary structure comprises 66 residues: Beta-toxin Cll1m (66 aa).

One can recognise an LCN-type CS-alpha/beta domain in the interval 1–66 (KEGYIVNLST…VWPLPKKTCT (66 aa)). Disulfide bonds link Cys-12/Cys-65, Cys-16/Cys-41, Cys-25/Cys-46, and Cys-29/Cys-48. At Thr-66 the chain carries Threonine amide.

This sequence belongs to the long (4 C-C) scorpion toxin superfamily. Sodium channel inhibitor family. Beta subfamily. As to expression, expressed by the venom gland.

It localises to the secreted. Its function is as follows. Beta toxins bind voltage-independently at site-4 of sodium channels (Nav) and shift the voltage of activation toward more negative potentials thereby affecting sodium channel activation and promoting spontaneous and repetitive firing. In Centruroides limpidus (Mexican scorpion), this protein is Beta-toxin Cll1m.